The chain runs to 805 residues: MVKGRKSQKADKVTKAKKRVADEVDESESEPELQVEGLIDAEAESEDDESFESAEENASAEEDEEDEEDEEDSDAELNKLLAEEEGDDSESEYNTSDFSEDDTKSMTDKLSGVKLTTIAEPIIKTKFSDGTPRVIKPEINPVYDSDDSDIESKNTIGNIPLSVYDEMPHIGYDVNGKRIMRPARASALDQLLDTIELPEGWTGLLDKESGASLNISKEELELISKIQRNEQTDESTNPYEPLIDWFTRHEEVMPLSAAPEPKRRFVPSKNEAKRIMKIVKAIREGRIIPPKKMKELREKEKSEDFNYDLWGDSTETNDHIMNLRAPKLPPPTNEESYNPPAEYLPTEEEIKEWENTEYSERERNFVPKKYDSLRKVPGYTESVRERFERSLDLYLAPRMRKNKLNIDPESLIPELPSPKDLRPFPIRCSTIYSGHEGKIRTLSIDPTGIWLATGSDDGSVRIWEILTGREVYRVQLVNKEDNPEDNIHSVEWNPDGSVGILAVAVGNNIFLIVPPIFGYDIENAGKVRIEHGFGYDTFGSTKKANLEVNGSDLESDDEAANANTAVKKQVAQWHKPTQRQMEQDICIVIVCKKPVKKLSWHRKGDYFVTVQPDSGNTSVLIHQLSKHLTQSPFRKSKGIIMDAKFHPFKPQLFVCSQRYVRIYDLSQQVLVKKLLPGARWLSNIDIHPRGDNLIASSYDKRVLWHDLDLAATPYKTLRYHDKAVRSTTFHKKLPLFCSAADDGFIHIFHATVYDDMMKNPMIVPLKKLTGHKVQGHLGVLDTIWHPKEAWLFSAGADNTARMWTT.

The disordered stretch occupies residues 1–105 (MVKGRKSQKA…SDFSEDDTKS (105 aa)). Over residues 8-22 (QKADKVTKAKKRVAD) the composition is skewed to basic and acidic residues. Positions 23 to 75 (EVDESESEPELQVEGLIDAEAESEDDESFESAEENASAEEDEEDEEDEEDSDA) are enriched in acidic residues. The segment at 264–382 (RFVPSKNEAK…LRKVPGYTES (119 aa)) is required for interaction with NOP7. The tract at residues 382–418 (SVRERFERSLDLYLAPRMRKNKLNIDPESLIPELPSP) is required for interaction with YTM1. 7 WD repeats span residues 434 to 473 (GHEGKIRTLSIDPTGIWLATGSDDGSVRIWEILTGREVYR), 482 to 522 (NPED…YDIE), 590 to 632 (VCKK…TQSP), 635 to 673 (KSKGIIMDAKFHPFKPQLFVCSQRYVRIYDLSQQVLVKK), 676 to 715 (PGARWLSNIDIHPRGDNLIASSYDKRVLWHDLDLAATPYK), 719 to 758 (YHDKAVRSTTFHKKLPLFCSAADDGFIHIFHATVYDDMMK), and 775 to 805 (GHLGVLDTIWHPKEAWLFSAGADNTARMWTT).

This sequence belongs to the WD repeat BOP1/ERB1 family. Component of the NOP7 complex, composed of ERB1, NOP7 and YTM1. The complex is held together by ERB1, which interacts with NOP7 via its N-terminal domain and with YTM1 via a high-affinity interaction between the seven-bladed beta-propeller domains of the 2 proteins. The NOP7 complex associates with the 66S pre-ribosome.

It is found in the nucleus. It localises to the nucleolus. Its subcellular location is the nucleoplasm. In terms of biological role, component of the NOP7 complex, which is required for maturation of the 25S and 5.8S ribosomal RNAs and formation of the 60S ribosome. This is Ribosome biogenesis protein ERB1 from Candida glabrata (strain ATCC 2001 / BCRC 20586 / JCM 3761 / NBRC 0622 / NRRL Y-65 / CBS 138) (Yeast).